The following is an 880-amino-acid chain: Alanine--tRNA ligase (880 aa).

Zn(2+) is bound by residues His-566, His-570, Cys-668, and His-672.

This sequence belongs to the class-II aminoacyl-tRNA synthetase family. It depends on Zn(2+) as a cofactor.

Its subcellular location is the cytoplasm. The enzyme catalyses tRNA(Ala) + L-alanine + ATP = L-alanyl-tRNA(Ala) + AMP + diphosphate. Catalyzes the attachment of alanine to tRNA(Ala) in a two-step reaction: alanine is first activated by ATP to form Ala-AMP and then transferred to the acceptor end of tRNA(Ala). Also edits incorrectly charged Ser-tRNA(Ala) and Gly-tRNA(Ala) via its editing domain. The protein is Alanine--tRNA ligase of Alkaliphilus oremlandii (strain OhILAs) (Clostridium oremlandii (strain OhILAs)).